The sequence spans 488 residues: Cobyric acid synthase (488 aa).

One can recognise a GATase cobBQ-type domain in the interval 252–440 (VPLIAVLRFP…VHGLFANDRQ (189 aa)). C334 (nucleophile) is an active-site residue. H432 is a catalytic residue.

It belongs to the CobB/CobQ family. CobQ subfamily.

Its pathway is cofactor biosynthesis; adenosylcobalamin biosynthesis. Catalyzes amidations at positions B, D, E, and G on adenosylcobyrinic A,C-diamide. NH(2) groups are provided by glutamine, and one molecule of ATP is hydrogenolyzed for each amidation. The sequence is that of Cobyric acid synthase from Methylorubrum populi (strain ATCC BAA-705 / NCIMB 13946 / BJ001) (Methylobacterium populi).